The primary structure comprises 131 residues: Profilin-5 (131 aa).

C13 and C115 form a disulfide bridge. The Involved in PIP2 interaction motif lies at 81 to 97 (AVIRGKKGAGGITIKKT). T111 carries the post-translational modification Phosphothreonine.

It belongs to the profilin family. Occurs in many kinds of cells as a complex with monomeric actin in a 1:1 ratio. Post-translationally, phosphorylated by MAP kinases.

Its subcellular location is the cytoplasm. The protein resides in the cytoskeleton. Its function is as follows. Binds to actin and affects the structure of the cytoskeleton. At high concentrations, profilin prevents the polymerization of actin, whereas it enhances it at low concentrations. The protein is Profilin-5 of Olea europaea (Common olive).